A 146-amino-acid polypeptide reads, in one-letter code: Pseudoazurin (146 aa).

The signal sequence occupies residues 1–23 (MRNIAIKFAAAGILAMLAAPALA). The Plastocyanin-like domain maps to 28–116 (VHMLNKGAEG…MGMIALIAVG (89 aa)). 4 residues coordinate Cu cation: H63, C101, H104, and M109.

Cu cation serves as cofactor.

It localises to the periplasm. Functionally, this soluble electron transfer copper protein is required for the inactivation of copper-containing nitrite reductase in the presence of oxygen. Serves as a direct electron donor to the nitrite reductase. The sequence is that of Pseudoazurin from Alcaligenes faecalis.